Reading from the N-terminus, the 1423-residue chain is DNA-directed RNA polymerase, mitochondrial (1423 aa).

The N-terminal 73 residues, 1 to 73, are a transit peptide targeting the mitochondrion; that stretch reads MLPRTASATR…RATVGFERHL (73 aa). A disordered region spans residues 266-303; sequence NMPDNVDPDTFAQQQQQQQQQQQQQQEQQQQQDTSIDQ. A compositionally biased stretch (low complexity) spans 278–297; it reads QQQQQQQQQQQQQQEQQQQQ. Catalysis depends on residues Asp901 and Lys970. A compositionally biased stretch (basic and acidic residues) spans 1055–1064; sequence EFERSERSPH. Residues 1055-1087 form a disordered region; the sequence is EFERSERSPHGDGTASGENITLAGNPRKSSAHK. Asp1180 is a catalytic residue. The interval 1316-1342 is disordered; it reads VRRGREMDEEGEVDGSEEAVEHEDGMH. Residues 1322 to 1336 show a composition bias toward acidic residues; the sequence is MDEEGEVDGSEEAVE.

This sequence belongs to the phage and mitochondrial RNA polymerase family.

The protein localises to the mitochondrion. It carries out the reaction RNA(n) + a ribonucleoside 5'-triphosphate = RNA(n+1) + diphosphate. Functionally, DNA-dependent RNA polymerase catalyzes the transcription of DNA into RNA using the four ribonucleoside triphosphates as substrates. This is DNA-directed RNA polymerase, mitochondrial (cyt-5) from Neurospora crassa (strain ATCC 24698 / 74-OR23-1A / CBS 708.71 / DSM 1257 / FGSC 987).